A 389-amino-acid chain; its full sequence is MALTPESPSSFPGLAATGSSVPEPPGGPNATLNSSWASPTEPSSLEDLVATGTIGTLLSAMGVVGVVGNAYTLVVTCRSLRAVASMYVYVVNLALADLLYLLSIPFIVATYVTKEWHFGDVGCRVLFGLDFLTMHASIFTLTVMSSERYAAVLRPLDTVQRPKGYRKLLALGTWLLALLLTLPVMLAMRLVRRGPKSLCLPAWGPRAHRAYLTLLFATSIAGPGLLIGLLYARLARAYRRSQRASFKRARRPGARALRLVLGIVLLFWACFLPFWLWQLLAQYHQAPLAPRTARIVNYLTTCLTYGNSCANPFLYTLLTRNYRDHLRGRVRGPGSGGGRGPVPSLQPRARFQRCSGRSLSSCSPQPTDSLVLAPAAPARPAPEGPRAPA.

Over residues 1 to 10 the composition is skewed to polar residues; it reads MALTPESPSS. The tract at residues 1 to 39 is disordered; sequence MALTPESPSSFPGLAATGSSVPEPPGGPNATLNSSWASP. At 1–54 the chain is on the extracellular side; it reads MALTPESPSSFPGLAATGSSVPEPPGGPNATLNSSWASPTEPSSLEDLVATGTI. N-linked (GlcNAc...) asparagine glycans are attached at residues asparagine 29 and asparagine 33. Residues 30–39 are compositionally biased toward polar residues; the sequence is ATLNSSWASP. A helical transmembrane segment spans residues 55–77; the sequence is GTLLSAMGVVGVVGNAYTLVVTC. The Cytoplasmic segment spans residues 78–87; sequence RSLRAVASMY. Residues 88–113 form a helical membrane-spanning segment; it reads VYVVNLALADLLYLLSIPFIVATYVT. The Extracellular portion of the chain corresponds to 114-124; it reads KEWHFGDVGCR. The cysteines at positions 123 and 199 are disulfide-linked. Residues 125–146 form a helical membrane-spanning segment; the sequence is VLFGLDFLTMHASIFTLTVMSS. The Cytoplasmic segment spans residues 147-167; that stretch reads ERYAAVLRPLDTVQRPKGYRK. The helical transmembrane segment at 168–186 threads the bilayer; that stretch reads LLALGTWLLALLLTLPVML. Over 187 to 209 the chain is Extracellular; the sequence is AMRLVRRGPKSLCLPAWGPRAHR. A helical transmembrane segment spans residues 210–232; it reads AYLTLLFATSIAGPGLLIGLLYA. At 233–258 the chain is on the cytoplasmic side; sequence RLARAYRRSQRASFKRARRPGARALR. A helical membrane pass occupies residues 259-284; that stretch reads LVLGIVLLFWACFLPFWLWQLLAQYH. The Extracellular segment spans residues 285–297; sequence QAPLAPRTARIVN. Residues 298 to 318 traverse the membrane as a helical segment; sequence YLTTCLTYGNSCANPFLYTLL. Over 319–389 the chain is Cytoplasmic; that stretch reads TRNYRDHLRG…PAPEGPRAPA (71 aa). The segment at 328-389 is disordered; the sequence is GRVRGPGSGG…PAPEGPRAPA (62 aa). Over residues 331 to 340 the composition is skewed to gly residues; the sequence is RGPGSGGGRG. Positions 355 to 368 are enriched in polar residues; the sequence is SGRSLSSCSPQPTD. Residues 377–389 are compositionally biased toward pro residues; that stretch reads PARPAPEGPRAPA.

It belongs to the G-protein coupled receptor 1 family. As to expression, most abundant expression in the heart and pancreas.

It localises to the cell membrane. In terms of biological role, high affinity receptor for urotensin-2 and urotensin-2B. The activity of this receptor is mediated by a G-protein that activate a phosphatidylinositol-calcium second messenger system. The sequence is that of Urotensin-2 receptor (UTS2R) from Homo sapiens (Human).